Here is a 361-residue protein sequence, read N- to C-terminus: MFSSVAHLARANPFNTPHLQLVHDGLGDFRSRPPGPTGQPRRPRNLAAAAVEEYSCEFGSAKYYALCGFGGVLSCGLTHTAVVPLDLVKCRMQVDPQKYKGIFNGFSVTLKEDGVRGLAKGWAPTFLGYSMQGLCKFGFYEVFKVLYSNMLGEENTYLWRTSLYLAASASAEFFADIALAPMEAAKVRIQTQPGYANTLRDAAPKMYKEEGLKAFYKGVAPLWMRQIPYTMMKFACFERTVEALYKFVVPKPRSECSKPEQLVVTFVAGYIAGVFCAIVSHPADSVVSVLNKEKGSSASLVLKRLGFKGVWKGLFARIIMIGTLTALQWFIYDSVKVYFRLPRPPPPEMPESLKKKLGLTQ.

The N-terminal 49 residues, 1–49 (MFSSVAHLARANPFNTPHLQLVHDGLGDFRSRPPGPTGQPRRPRNLAAA), are a transit peptide targeting the mitochondrion. Residues 25–44 (GLGDFRSRPPGPTGQPRRPR) are disordered. Topologically, residues 50–62 (AVEEYSCEFGSAK) are mitochondrial intermembrane. Solcar repeat units lie at residues 62 to 146 (KYYA…FKVL), 159 to 243 (WRTS…TVEA), and 260 to 338 (EQLV…VKVY). The helical transmembrane segment at 63–85 (YYALCGFGGVLSCGLTHTAVVPL) threads the bilayer. The Mitochondrial matrix portion of the chain corresponds to 86 to 120 (DLVKCRMQVDPQKYKGIFNGFSVTLKEDGVRGLAK). Lysine 98 carries the post-translational modification N6-acetyllysine. An N6-methyllysine modification is found at lysine 111. The helical transmembrane segment at 121–140 (GWAPTFLGYSMQGLCKFGFY) threads the bilayer. Over 141–160 (EVFKVLYSNMLGEENTYLWR) the chain is Mitochondrial intermembrane. A helical transmembrane segment spans residues 161 to 182 (TSLYLAASASAEFFADIALAPM). Over 183-217 (EAAKVRIQTQPGYANTLRDAAPKMYKEEGLKAFYK) the chain is Mitochondrial matrix. Residue tyrosine 195 is modified to Phosphotyrosine. Lysine 208 is modified (N6-acetyllysine). A helical membrane pass occupies residues 218-237 (GVAPLWMRQIPYTMMKFACF). Residues 238 to 260 (ERTVEALYKFVVPKPRSECSKPE) lie on the Mitochondrial intermembrane side of the membrane. The chain crosses the membrane as a helical span at residues 261-283 (QLVVTFVAGYIAGVFCAIVSHPA). Residues 284-313 (DSVVSVLNKEKGSSASLVLKRLGFKGVWKG) lie on the Mitochondrial matrix side of the membrane. The chain crosses the membrane as a helical span at residues 314 to 332 (LFARIIMIGTLTALQWFIY). At 333–361 (DSVKVYFRLPRPPPPEMPESLKKKLGLTQ) the chain is on the mitochondrial intermembrane side.

This sequence belongs to the mitochondrial carrier (TC 2.A.29) family. Interacts with PPIF; the interaction is impaired by CsA.

It localises to the mitochondrion inner membrane. It carries out the reaction phosphate(in) + H(+)(in) = phosphate(out) + H(+)(out). In terms of biological role, inorganic ion transporter that transports phosphate or copper ions across the mitochondrial inner membrane into the matrix compartment. Mediates proton-coupled symport of phosphate ions necessary for mitochondrial oxidative phosphorylation of ADP to ATP. Transports copper ions probably in the form of anionic copper(I) complexes to maintain mitochondrial matrix copper pool and to supply copper for cytochrome C oxidase complex assembly. May also play a role in regulation of the mitochondrial permeability transition pore (mPTP). The chain is Solute carrier family 25 member 3 from Pongo abelii (Sumatran orangutan).